The following is a 728-amino-acid chain: Polyribonucleotide nucleotidyltransferase (728 aa).

Residues Asp-509 and Asp-515 each contribute to the Mg(2+) site. The 63-residue stretch at 576-638 (TKIYTFYIPK…TKLKIAILKI (63 aa)) folds into the KH domain. The S1 motif domain occupies 648 to 715 (GTIYKAKVKN…KFRKIKLSHK (68 aa)).

It belongs to the polyribonucleotide nucleotidyltransferase family. Mg(2+) is required as a cofactor.

It is found in the cytoplasm. It carries out the reaction RNA(n+1) + phosphate = RNA(n) + a ribonucleoside 5'-diphosphate. Functionally, involved in mRNA degradation. Catalyzes the phosphorolysis of single-stranded polyribonucleotides processively in the 3'- to 5'-direction. In Karelsulcia muelleri (strain GWSS) (Sulcia muelleri), this protein is Polyribonucleotide nucleotidyltransferase.